A 194-amino-acid polypeptide reads, in one-letter code: Large ribosomal subunit protein bL9 (194 aa).

Positions 148 to 194 are disordered; sequence QDEAERQARGENVINSQFEEDRAAEAEAAQDMAEGGAGSFEGDHYEA.

The protein belongs to the bacterial ribosomal protein bL9 family.

Binds to the 23S rRNA. The sequence is that of Large ribosomal subunit protein bL9 from Caulobacter vibrioides (strain ATCC 19089 / CIP 103742 / CB 15) (Caulobacter crescentus).